The chain runs to 526 residues: MPSQAVFLVLTTVFSQCVGKFPIYTIPDKLGPWSPIDIHHLSCPNNLVVEDDGCTTLSGFTYMELKVGYITTIKVDGFTCTGIVTEAETYTNFVGYVTTTFKRKHFRPGPSACRDAYNWKAAGDPRYEESLHNPYPDSHWLRTVTTTKESLLIISPSVVDMDAYDKSLLSKIFPNGKCPGVSIASPFCSTNHDYTIWMPENTKTGMSCDIFTTSKGKRATKDGKLCGFVDERGLYKSLKGSCKLKLCGVSGLRLMDGSWVSIQNHEEAKWCPPDQLVNVHDFHSDEIEHLIVEELVKKREECLDALESIMTTKSISFRRLSHLRKLVPGFGKAYTIINKTLMEADAHYKSIREWSEIIPSKGCLVAGGRCYHHHNGVFFNGIILSPDGHVLIPEMQSALLQQHIELLESSVIPLMHPLADPSTVFKGDDGAEDFVEVHLPDVQKQISGIDLGLPEWKRYFLIGVAALTLFALTIFVVVCCRRVRRRERAKPNPVELIRKVSVTSQSGKVIPSWESYKVEAEGQSQA.

The N-terminal stretch at 1 to 19 (MPSQAVFLVLTTVFSQCVG) is a signal peptide. At 20–459 (KFPIYTIPDK…DLGLPEWKRY (440 aa)) the chain is on the virion surface side. The N-linked (GlcNAc...) asparagine; by host glycan is linked to Asn338. The chain crosses the membrane as a helical span at residues 460 to 480 (FLIGVAALTLFALTIFVVVCC). The S-palmitoyl cysteine; by host moiety is linked to residue Cys480. Residues 481–526 (RRVRRRERAKPNPVELIRKVSVTSQSGKVIPSWESYKVEAEGQSQA) are Intravirion-facing.

It belongs to the lyssavirus glycoprotein family. In terms of assembly, homotrimer. Interacts with matrix protein. Glycosylated and palmitoylated by host. Glycosylation is crucial for glycoprotein export at the cell surface.

The protein resides in the virion membrane. Attaches the virus to host cellular receptor, inducing endocytosis of the virion. In the endosome, the acidic pH induces conformational changes in the glycoprotein trimer, which trigger fusion between virus and cell membrane. There is convincing in vitro evidence that the muscular form of the nicotinic acetylcholine receptor (nAChR), the neuronal cell adhesion molecule (NCAM), and the p75 neurotrophin receptor (p75NTR) bind glycoprotein and thereby facilitate rabies virus entry into cells. This chain is Glycoprotein (G), found in Khujand virus (KHUV).